The following is a 308-amino-acid chain: Putative acetyl-hydrolase LipR (308 aa).

Positions 1–40 (MNLRKNVIRSVLRGARPLFASRRLGIAGRRVLLATLTAGA) are cleaved as a signal peptide. The Involved in the stabilization of the negatively charged intermediate by the formation of the oxyanion hole signature appears at 76–78 (HGG). Active-site residues include Ser146, Asp239, and His269.

This sequence belongs to the 'GDXG' lipolytic enzyme family.

Required for maintaining the appropriate mycolic acid composition and permeability of the envelope on its exposure to acidic pH. This chain is Putative acetyl-hydrolase LipR (lipR), found in Mycobacterium tuberculosis (strain ATCC 25618 / H37Rv).